The sequence spans 220 residues: Octanoyltransferase (220 aa).

The 181-residue stretch at 31–211 (GTAADHLLLL…HFARIFDFEM (181 aa)) folds into the BPL/LPL catalytic domain. Substrate contacts are provided by residues 76-83 (RGGDVTYH), 143-145 (AIG), and 156-158 (GFA). Catalysis depends on cysteine 174, which acts as the Acyl-thioester intermediate.

It belongs to the LipB family.

The protein resides in the cytoplasm. It carries out the reaction octanoyl-[ACP] + L-lysyl-[protein] = N(6)-octanoyl-L-lysyl-[protein] + holo-[ACP] + H(+). It participates in protein modification; protein lipoylation via endogenous pathway; protein N(6)-(lipoyl)lysine from octanoyl-[acyl-carrier-protein]: step 1/2. In terms of biological role, catalyzes the transfer of endogenously produced octanoic acid from octanoyl-acyl-carrier-protein onto the lipoyl domains of lipoate-dependent enzymes. Lipoyl-ACP can also act as a substrate although octanoyl-ACP is likely to be the physiological substrate. The chain is Octanoyltransferase from Solibacter usitatus (strain Ellin6076).